A 205-amino-acid chain; its full sequence is Guanylate kinase (205 aa).

The Guanylate kinase-like domain occupies 17–195 (PRLTVLSGPS…VSRELLALML (179 aa)). 24 to 31 (GPSGVGKS) is a binding site for ATP.

It belongs to the guanylate kinase family.

The protein resides in the cytoplasm. The catalysed reaction is GMP + ATP = GDP + ADP. Functionally, essential for recycling GMP and indirectly, cGMP. The sequence is that of Guanylate kinase from Streptomyces kasugaensis.